Here is a 364-residue protein sequence, read N- to C-terminus: D-alanine--D-alanine ligase A (364 aa).

The ATP-grasp domain occupies 145 to 348 (KRLLRDAGLN…YTDLITRLIE (204 aa)). 175–230 (ESKLGLPLFVKPANQGSSVGVSKVTSEEQYTIAVDLAFEFDHKVIVEQGIKGREIE) serves as a coordination point for ATP. Mg(2+) is bound by residues Asp302, Glu315, and Asn317.

This sequence belongs to the D-alanine--D-alanine ligase family. Mg(2+) serves as cofactor. Mn(2+) is required as a cofactor.

The protein localises to the cytoplasm. It carries out the reaction 2 D-alanine + ATP = D-alanyl-D-alanine + ADP + phosphate + H(+). Its pathway is cell wall biogenesis; peptidoglycan biosynthesis. Cell wall formation. In Escherichia coli O6:H1 (strain CFT073 / ATCC 700928 / UPEC), this protein is D-alanine--D-alanine ligase A.